The sequence spans 555 residues: DNA repair and recombination protein rhm52 (555 aa).

The DNA-binding element occupies 148 to 152 (KRALR). Disordered regions lie at residues 197-232 (VVAE…DSFD) and 251-555 (HPDE…MKLN). A compositionally biased stretch (low complexity) spans 260–276 (NSHASGSSGNTGASTTN). 2 stretches are compositionally biased toward polar residues: residues 283–300 (SGNQ…SRMN) and 312–334 (TPNH…QNNH). Low complexity-rich tracts occupy residues 354 to 375 (NNNN…GPQQ) and 382 to 404 (NGAA…AVAR). Polar residues predominate over residues 468 to 478 (DNPSNNAGNGV). A compositionally biased stretch (low complexity) spans 479-490 (QNQPQKPQPSQQ). The segment covering 491-500 (RGSILNPQFD) has biased composition (polar residues). A compositionally biased stretch (low complexity) spans 536–547 (PNGTSNGNGTPG).

The protein belongs to the RAD52 family. As to quaternary structure, part of a complex that includes RAD51, RAD52 and RAD59.

It is found in the nucleus. In terms of biological role, involved in DNA double-strand break (DSB) repair and recombination. Promotes the annealing of complementary single-stranded DNA and by stimulation of the RAD51 recombinase. In Pyricularia oryzae (strain 70-15 / ATCC MYA-4617 / FGSC 8958) (Rice blast fungus), this protein is DNA repair and recombination protein rhm52 (RHM52).